We begin with the raw amino-acid sequence, 327 residues long: Aldo-keto reductase FVEG_12638 (327 aa).

Aspartate 51 is an NADP(+) binding site. Residue tyrosine 56 is the Proton donor of the active site. Residue histidine 122 participates in substrate binding. NADP(+) is bound by residues 152–153 (SE), 202–212 (GPLGHGWLVED), and 286–294 (ENFTSRDIE).

This sequence belongs to the aldo/keto reductase family. Aldo/keto reductase 2 subfamily.

In terms of biological role, aldo-keto reductase; part of the Fusarium detoxification of benzoxazolinone cluster 2 (FDB2) involved in the degradation of benzoxazolinones produced by the host plant. Maize, wheat, and rye produce the 2 benzoxazinone phytoanticipins 2,4-dihy-droxy-7-methoxy-1,4-benzoxazin-3-one (DIMBOA) and 2,4-dihydroxy-1,4-benzoxazin-3-one (DIBOA) that, due to their inherent instability once released, spontaneously degrade to the more stable corresponding benzoxazolinones, 6-methoxy-2-benzoxazolinone (MBOA) and 2-benzoxazolinone (BOA), respectively. The first step in the detoxification of benzoxazolinones involves the hydrolysis of the cyclic ester bond of benzoxazolinones by the FDB1 cluster gamma-lactamase MBL1 to aminophenols. MBL1 is able to convert BOA into 2-aminophenol (2-AP), as well as MBOA into 5-methoxy-2-aminophenol (2-AMP). The FDB2 cluster N-malonyltransferase FDB2/NAT1 then metabolizes aminophenols via N-malonylation to non-toxic malonamic acids. FDB2/NAT1 converts 2-AP into N-(2-hydroxyphenyl) malonamic acid (HPMA) and 2-AMP into N-(2-hydroxy-4-methoxyphenyl) malonamic acid (HMPMA). The duplicated dienlactone hydrolases DLH1 and DLH2 may provide redundant function for hydrolyzing the lactone moiety in the BOA molecule. The roles of the amidases an other enzymes encoded by the 2 FDB clusters have not been identified so far. The sequence is that of Aldo-keto reductase FVEG_12638 from Gibberella moniliformis (strain M3125 / FGSC 7600) (Maize ear and stalk rot fungus).